A 277-amino-acid polypeptide reads, in one-letter code: MGCVPRIEFGCSSQSLTLSWNLRAWNLCRLNTISHFQKLPYPLVASTRKHYKNSLLLKRFLVGVGTEESSLSEDLLDESLSRPLTSDELKSLLIDTERSKLVKKLSEANQQNRFLKRQLKTQEHEITNIKTELALMELEVQALVKLAEEIANLGIPQGSRKISGKYIQSHLLSRLDAVQKKMKEQIKGVEAAQSKEVHVFWIGMAESVQVMGSFDGWSQREDLSPEYSALFTKFSTTLFLRPGRYEMKFLVDGEWQISPEFPTSGEGLMENNVLVVE.

The transit peptide at 1-44 directs the protein to the chloroplast; the sequence is MGCVPRIEFGCSSQSLTLSWNLRAWNLCRLNTISHFQKLPYPLV. Residues 95–152 adopt a coiled-coil conformation; the sequence is DTERSKLVKKLSEANQQNRFLKRQLKTQEHEITNIKTELALMELEVQALVKLAEEIAN.

As to quaternary structure, interacts with GBSS1.

It localises to the plastid. It is found in the chloroplast stroma. Involved in targeting GBSS1 to the starch granule. Was originally thought to be a carbohydrate-binding scaffold protein, but it has been shown that it is mainly found as a soluble protein and that interaction with GBSS1 is a pre-requisite for subsequent starch granule binding. Dissociation from starch as a function of pH, Mg(2+) concentration or redox state is not observed. Interacts primarily with amylopectin and is required for amylose synthesis. In Arabidopsis thaliana (Mouse-ear cress), this protein is Protein PTST, chloroplastic.